Consider the following 115-residue polypeptide: MKLCVIIIASLMVASVSGRLRKIKGTELDKKMLLEKLGHGMDIRFEETPRACSKKAGEKCKSNCDCCGYSTLCGYITEGKEVKYQCMSKTSNNKILNTVGLGVNAIENMLSFCFR.

A signal peptide spans 1–18; it reads MKLCVIIIASLMVASVSG. Residues 19–51 constitute a propeptide that is removed on maturation; that stretch reads RLRKIKGTELDKKMLLEKLGHGMDIRFEETPRA. Cystine bridges form between Cys52–Cys67, Cys60–Cys73, Cys64–Cys113, and Cys66–Cys86.

Belongs to the neurotoxin 03 (Tx2) family. 02 subfamily. In terms of tissue distribution, expressed by the venom gland.

Its subcellular location is the secreted. Probable ion channel inhibitor. In Chilobrachys guangxiensis (Chinese earth tiger tarantula), this protein is U31-theraphotoxin-Cg1a.